The chain runs to 338 residues: Ketol-acid reductoisomerase (NADP(+)) (338 aa).

The 181-residue stretch at 1–181 (MKVFYDKDCD…GGGRAGIIET (181 aa)) folds into the KARI N-terminal Rossmann domain. NADP(+) contacts are provided by residues 24 to 27 (YGSQ), arginine 47, and serine 52. The active site involves histidine 107. NADP(+) is bound at residue glycine 133. In terms of domain architecture, KARI C-terminal knotted spans 182 to 327 (NFREETETDL…GKLRAMMPWI (146 aa)). Mg(2+)-binding residues include aspartate 190, glutamate 194, glutamate 226, and glutamate 230. Serine 251 serves as a coordination point for substrate.

This sequence belongs to the ketol-acid reductoisomerase family. Requires Mg(2+) as cofactor.

The catalysed reaction is (2R)-2,3-dihydroxy-3-methylbutanoate + NADP(+) = (2S)-2-acetolactate + NADPH + H(+). It catalyses the reaction (2R,3R)-2,3-dihydroxy-3-methylpentanoate + NADP(+) = (S)-2-ethyl-2-hydroxy-3-oxobutanoate + NADPH + H(+). It functions in the pathway amino-acid biosynthesis; L-isoleucine biosynthesis; L-isoleucine from 2-oxobutanoate: step 2/4. It participates in amino-acid biosynthesis; L-valine biosynthesis; L-valine from pyruvate: step 2/4. In terms of biological role, involved in the biosynthesis of branched-chain amino acids (BCAA). Catalyzes an alkyl-migration followed by a ketol-acid reduction of (S)-2-acetolactate (S2AL) to yield (R)-2,3-dihydroxy-isovalerate. In the isomerase reaction, S2AL is rearranged via a Mg-dependent methyl migration to produce 3-hydroxy-3-methyl-2-ketobutyrate (HMKB). In the reductase reaction, this 2-ketoacid undergoes a metal-dependent reduction by NADPH to yield (R)-2,3-dihydroxy-isovalerate. The chain is Ketol-acid reductoisomerase (NADP(+)) from Bordetella bronchiseptica (strain ATCC BAA-588 / NCTC 13252 / RB50) (Alcaligenes bronchisepticus).